A 154-amino-acid polypeptide reads, in one-letter code: Protein FAM162A (154 aa).

The segment at 76 to 102 (RFKKEDEIPETVSLEMLDTAKNKMRVK) is required for proapoptotic activity. A helical membrane pass occupies residues 103–120 (ISYLMIALTVVGCICMVI).

It belongs to the UPF0389 family. As to quaternary structure, interacts with HSP90AB1; HSP90AB1 is essential for FAM162A mitochondrial localization and pro-apoptotic activity. Interacts with VDAC2; the interaction is probably involved in inducing mitochondrial permeability transition.

It localises to the mitochondrion membrane. In terms of biological role, proposed to be involved in regulation of apoptosis; the exact mechanism may differ between cell types/tissues. May be involved in hypoxia-induced cell death of transformed cells implicating cytochrome C release and caspase activation (such as CASP9) and inducing mitochondrial permeability transition. May be involved in hypoxia-induced cell death of neuronal cells probably by promoting release of AIFM1 from mitochondria to cytoplasm and its translocation to the nucleus; however, the involvement of caspases has been reported conflictingly. This chain is Protein FAM162A (FAM162A), found in Pongo abelii (Sumatran orangutan).